Consider the following 256-residue polypeptide: NAD-dependent protein deacylase 4 (256 aa).

Residues 1 to 250 (MRLPAEALKD…AKIHESLSTG (250 aa)) form the Deacetylase sirtuin-type domain. 19–39 (GAGISAESGILTYLDQMPKLW) provides a ligand contact to NAD(+). Substrate-binding residues include Tyr-64 and Arg-67. Residue 98–101 (QNVD) coordinates NAD(+). Catalysis depends on His-116, which acts as the Proton acceptor. Zn(2+) contacts are provided by Cys-124, Cys-127, Cys-152, and Cys-155. Residues 192–194 (GTS), 218–220 (NTV), and Ala-236 each bind NAD(+).

The protein belongs to the sirtuin family. Class III subfamily. It depends on Zn(2+) as a cofactor.

It localises to the cytoplasm. It catalyses the reaction N(6)-acetyl-L-lysyl-[protein] + NAD(+) + H2O = 2''-O-acetyl-ADP-D-ribose + nicotinamide + L-lysyl-[protein]. The enzyme catalyses N(6)-succinyl-L-lysyl-[protein] + NAD(+) + H2O = 2''-O-succinyl-ADP-D-ribose + nicotinamide + L-lysyl-[protein]. Its function is as follows. NAD-dependent lysine deacetylase and desuccinylase that specifically removes acetyl and succinyl groups on target proteins. Modulates the activities of several proteins which are inactive in their acylated form. This chain is NAD-dependent protein deacylase 4, found in Pseudomonas syringae pv. tomato (strain ATCC BAA-871 / DC3000).